We begin with the raw amino-acid sequence, 178 residues long: Ribonuclease M5 (178 aa).

A Toprim domain is found at 4–100 (NEFIVVEGRD…KIGVEHADLI (97 aa)). Mg(2+) is bound by residues Glu10, Asp56, and Asp58.

The protein belongs to the ribonuclease M5 family. Mg(2+) is required as a cofactor.

The protein localises to the cytoplasm. The catalysed reaction is Endonucleolytic cleavage of RNA, removing 21 and 42 nucleotides, respectively, from the 5'- and 3'-termini of a 5S-rRNA precursor.. Its function is as follows. Required for correct processing of both the 5' and 3' ends of 5S rRNA precursor. Cleaves both sides of a double-stranded region yielding mature 5S rRNA in one step. The sequence is that of Ribonuclease M5 from Staphylococcus aureus (strain NCTC 8325 / PS 47).